A 515-amino-acid polypeptide reads, in one-letter code: 1-pyrroline-5-carboxylate dehydrogenase (515 aa).

Residues Glu286 and Cys320 contribute to the active site.

This sequence belongs to the aldehyde dehydrogenase family. RocA subfamily.

It carries out the reaction L-glutamate 5-semialdehyde + NAD(+) + H2O = L-glutamate + NADH + 2 H(+). Its pathway is amino-acid degradation; L-proline degradation into L-glutamate; L-glutamate from L-proline: step 2/2. The chain is 1-pyrroline-5-carboxylate dehydrogenase from Oceanobacillus iheyensis (strain DSM 14371 / CIP 107618 / JCM 11309 / KCTC 3954 / HTE831).